The chain runs to 255 residues: tRNA (guanine-N(1)-)-methyltransferase (255 aa).

Residues G113 and 133–138 (VGDFVL) contribute to the S-adenosyl-L-methionine site.

The protein belongs to the RNA methyltransferase TrmD family. As to quaternary structure, homodimer.

It localises to the cytoplasm. The enzyme catalyses guanosine(37) in tRNA + S-adenosyl-L-methionine = N(1)-methylguanosine(37) in tRNA + S-adenosyl-L-homocysteine + H(+). Specifically methylates guanosine-37 in various tRNAs. The polypeptide is tRNA (guanine-N(1)-)-methyltransferase (Francisella philomiragia subsp. philomiragia (strain ATCC 25017 / CCUG 19701 / FSC 153 / O#319-036)).